Reading from the N-terminus, the 198-residue chain is Small ribosomal subunit protein eS1 (198 aa).

This sequence belongs to the eukaryotic ribosomal protein eS1 family.

This Nanoarchaeum equitans (strain Kin4-M) protein is Small ribosomal subunit protein eS1.